We begin with the raw amino-acid sequence, 269 residues long: MAAAGRRGLLLLFVLWMMVTVILPASGEGGWKQNGLGIAAAVMEEERCTVERRAHITYSEFMQHYAFLKPVILQGLTDNSKFRALCSRENLLASFGDNIVRLSTANTYSYQKVDLPFQEYVEQLLQPQDPASLGNDTLYFFGDNNFTEWASLFQHYSPPPFRLLGTTPAYSFGIAGAGSGVPFHWHGPGFSEVIYGRKRWFLYPPEKTPEFHPNKTTLAWLLEIYPSLALSARPLECTIQAGEVLYFPDRWWHATLNLDTSVFISTFLG.

Residues 1 to 24 form the signal peptide; that stretch reads MAAAGRRGLLLLFVLWMMVTVILP. 3 N-linked (GlcNAc...) asparagine glycosylation sites follow: Asn135, Asn145, and Asn214. The region spanning 136–269 is the JmjC domain; sequence DTLYFFGDNN…TSVFISTFLG (134 aa).

As to quaternary structure, oligomer. Dimer. Interacts with PKM; regulates angiogenesis and metabolism. In terms of processing, N-glycosylated.

It is found in the endoplasmic reticulum lumen. The protein resides in the cytoplasm. In terms of biological role, functions as a positive regulator of TNF-induced NF-kappaB signaling. Regulates angiogenesis and cellular metabolism through interaction with PKM. This chain is JmjC domain-containing protein 8, found in Mus musculus (Mouse).